The following is a 528-amino-acid chain: Glucosidase 2 subunit beta (528 aa).

The N-terminal stretch at 1-14 is a signal peptide; that stretch reads MLLPLLLLLPMCWA. S24 carries the phosphoserine; by FAM20C modification. 2 consecutive LDL-receptor class A domains span residues 37–71 and 72–113; these read FTCL…AACP and NGSF…VICE. 2 disulfide bridges follow: C39/C58 and C56/C70. Residue D49 participates in substrate binding. Residues Q50, D53, Y55, D57, D63, and E64 each coordinate Ca(2+). Position 53 (D53) interacts with substrate. Residue N72 is glycosylated (N-linked (GlcNAc...) asparagine). 3 cysteine pairs are disulfide-bonded: C77/C99, C97/C112, and C100/C116. Phosphoserine; by PKC is present on S89. The Ca(2+) site is built by R91, D94, V96, D98, D104, and E105. An N6-succinyllysine modification is found at K166. S168 is modified (phosphoserine; by FAM20C). EF-hand domains follow at residues 209–244 and 245–290; these read QEQE…DTDG and DGAL…TDLP. Ca(2+) contacts are provided by D222, D224, D226, T228, and E233. Disordered stretches follow at residues 234 to 266 and 281 to 357; these read LQTH…TDAT and RSEA…DKMP. Residues 247–258 are compositionally biased toward low complexity; the sequence is ALSEAEAQALLS. Over residues 312-337 the composition is skewed to acidic residues; sequence TEEEEEEEEEEEEEAEEEEEEEDSEE. A compositionally biased stretch (pro residues) spans 338–348; that stretch reads APPPLSPPQPA. 2 positions are modified to phosphoserine; by PKC: S383 and S390. Residues 413-514 enclose the MRH domain; that stretch reads SQCYELTTNE…ELMTPAACPE (102 aa). An intrachain disulfide couples C415 to C428. The residue at position 434 (S434) is a Phosphoserine; by PKC. Cystine bridges form between C471–C500 and C485–C512. An N-linked (GlcNAc...) asparagine glycan is attached at N476. The Prevents secretion from ER motif lies at 525-528; it reads HDEL.

Heterodimer of a catalytic alpha subunit (GANAB) and a beta subunit (PRKCSH). Binds glycosylated PTPRC.

It is found in the endoplasmic reticulum. Its pathway is glycan metabolism; N-glycan metabolism. Its function is as follows. Regulatory subunit of glucosidase II that cleaves sequentially the 2 innermost alpha-1,3-linked glucose residues from the Glc(2)Man(9)GlcNAc(2) oligosaccharide precursor of immature glycoproteins. Required for efficient PKD1/Polycystin-1 biogenesis and trafficking to the plasma membrane of the primary cilia. This chain is Glucosidase 2 subunit beta, found in Homo sapiens (Human).